We begin with the raw amino-acid sequence, 344 residues long: tRNA-specific 2-thiouridylase MnmA (344 aa).

ATP-binding positions include 9–16 and M34; that span reads AMSGGVDS. C92 (nucleophile) is an active-site residue. An intrachain disulfide couples C92 to C188. G116 contacts ATP. The tract at residues 138 to 140 is interaction with tRNA; it reads KDQ. C188 serves as the catalytic Cysteine persulfide intermediate.

This sequence belongs to the MnmA/TRMU family.

The protein localises to the cytoplasm. It carries out the reaction S-sulfanyl-L-cysteinyl-[protein] + uridine(34) in tRNA + AH2 + ATP = 2-thiouridine(34) in tRNA + L-cysteinyl-[protein] + A + AMP + diphosphate + H(+). Functionally, catalyzes the 2-thiolation of uridine at the wobble position (U34) of tRNA, leading to the formation of s(2)U34. This chain is tRNA-specific 2-thiouridylase MnmA, found in Desulfotalea psychrophila (strain LSv54 / DSM 12343).